A 665-amino-acid polypeptide reads, in one-letter code: Transketolase (665 aa).

His-26 is a substrate binding site. Thiamine diphosphate contacts are provided by residues His-66 and Gly-114–Leu-116. Asp-155 lines the Mg(2+) pocket. Positions 156 and 185 each coordinate thiamine diphosphate. Mg(2+)-binding residues include Asn-185 and Ile-187. Positions 261, 358, and 385 each coordinate substrate. Position 261 (His-261) interacts with thiamine diphosphate. Residue Glu-411 is the Proton donor of the active site. Phe-437 is a thiamine diphosphate binding site. Residues His-461, Asp-469, and Arg-520 each contribute to the substrate site.

The protein belongs to the transketolase family. In terms of assembly, homodimer. Requires Mg(2+) as cofactor. Ca(2+) serves as cofactor. The cofactor is Mn(2+). It depends on Co(2+) as a cofactor. Thiamine diphosphate is required as a cofactor.

It catalyses the reaction D-sedoheptulose 7-phosphate + D-glyceraldehyde 3-phosphate = aldehydo-D-ribose 5-phosphate + D-xylulose 5-phosphate. Its function is as follows. Catalyzes the transfer of a two-carbon ketol group from a ketose donor to an aldose acceptor, via a covalent intermediate with the cofactor thiamine pyrophosphate. The chain is Transketolase (tkt) from Buchnera aphidicola subsp. Schizaphis graminum (strain Sg).